The chain runs to 186 residues: Putative manganese efflux pump MntP (186 aa).

6 helical membrane passes run 1-21 (MSFLTNFLLGLGLSMDAFAVS), 41-61 (VFFGGFQAFMPVLGWLGGSAV), 71-91 (WIAFGLLTFIGGKMIYEALYG), 105-125 (LLMLAIATSIDALAVGISFAF), 130-150 (ILEPVIIIGCVTFVMSFCGAV), and 165-185 (IIGGLILIGIGGKILAEHLLW).

This sequence belongs to the MntP (TC 9.B.29) family.

It is found in the cell membrane. In terms of biological role, probably functions as a manganese efflux pump. This chain is Putative manganese efflux pump MntP, found in Methanosarcina barkeri (strain Fusaro / DSM 804).